We begin with the raw amino-acid sequence, 254 residues long: Triosephosphate isomerase, cytosolic (254 aa).

Asn-10 and Lys-12 together coordinate substrate. The Electrophile role is filled by His-96. Glu-166 functions as the Proton acceptor in the catalytic mechanism.

This sequence belongs to the triosephosphate isomerase family. As to quaternary structure, homodimer.

The protein localises to the cytoplasm. It carries out the reaction D-glyceraldehyde 3-phosphate = dihydroxyacetone phosphate. Its pathway is carbohydrate biosynthesis; gluconeogenesis. The protein operates within carbohydrate degradation; glycolysis; D-glyceraldehyde 3-phosphate from glycerone phosphate: step 1/1. This chain is Triosephosphate isomerase, cytosolic (TPIP1), found in Petunia hybrida (Petunia).